The following is a 109-amino-acid chain: Cell division protein ZapA (109 aa).

Residues 71-99 (KTRDYASNMEQRIRMLQQTIEQALLEQGR) are a coiled coil.

This sequence belongs to the ZapA family. Type 1 subfamily. In terms of assembly, homodimer. Interacts with FtsZ.

Its subcellular location is the cytoplasm. In terms of biological role, activator of cell division through the inhibition of FtsZ GTPase activity, therefore promoting FtsZ assembly into bundles of protofilaments necessary for the formation of the division Z ring. It is recruited early at mid-cell but it is not essential for cell division. This is Cell division protein ZapA from Serratia proteamaculans (strain 568).